Here is a 623-residue protein sequence, read N- to C-terminus: Kelch-like protein diablo (623 aa).

Residues 1-54 (MGDLPGSGSTAQPRDAAVTGTGGNSTAGGGSSVGSTAVDRPPSPARLSHTSEKH) are disordered. The residue at position 19 (T19) is a Phosphothreonine. The segment covering 20–32 (GTGGNSTAGGGSS) has biased composition (gly residues). Residues 72-139 (CDVVLNVGGR…CYTAHIIVEE (68 aa)) form the BTB domain. The region spanning 174–276 (CLGIRAFADT…SPKFLVGTVG (103 aa)) is the BACK domain. Kelch repeat units follow at residues 323–369 (VLFA…VLND), 371–417 (LYAV…VLDG), 418–464 (FLYA…VLGG), 466–511 (LYAI…VFNN), 513–558 (IYAV…VVNG), and 559–605 (QLYA…VMRA).

Its pathway is protein modification; protein ubiquitination. Its function is as follows. Probable substrate-specific adapter of an E3 ubiquitin-protein ligase complex which mediates the ubiquitination and subsequent proteasomal degradation of target proteins. May have a role in synapse differentiation and growth. The polypeptide is Kelch-like protein diablo (Drosophila melanogaster (Fruit fly)).